A 115-amino-acid polypeptide reads, in one-letter code: NADH-ubiquinone oxidoreductase chain 3 (115 aa).

Helical transmembrane passes span 3 to 23 (LLMA…IAFW), 55 to 75 (FFLV…LLPL), and 84 to 104 (LSAM…GLMY).

This sequence belongs to the complex I subunit 3 family. In terms of assembly, core subunit of respiratory chain NADH dehydrogenase (Complex I) which is composed of 45 different subunits. Interacts with TMEM186. Interacts with TMEM242.

It localises to the mitochondrion inner membrane. It catalyses the reaction a ubiquinone + NADH + 5 H(+)(in) = a ubiquinol + NAD(+) + 4 H(+)(out). Core subunit of the mitochondrial membrane respiratory chain NADH dehydrogenase (Complex I) which catalyzes electron transfer from NADH through the respiratory chain, using ubiquinone as an electron acceptor. Essential for the catalytic activity of complex I. The protein is NADH-ubiquinone oxidoreductase chain 3 of Sigmodon ochrognathus (Yellow-nosed cotton rat).